The primary structure comprises 205 residues: Small ribosomal subunit protein uS4 (205 aa).

The segment at 27-46 (LNKRDYAPGQHGQRRKGKPS) is disordered. One can recognise an S4 RNA-binding domain in the interval 118 to 178 (HGHVLVNGKR…HVDHRLMKGT (61 aa)).

Belongs to the universal ribosomal protein uS4 family. As to quaternary structure, part of the 30S ribosomal subunit. Contacts protein S5. The interaction surface between S4 and S5 is involved in control of translational fidelity.

Functionally, one of the primary rRNA binding proteins, it binds directly to 16S rRNA where it nucleates assembly of the body of the 30S subunit. With S5 and S12 plays an important role in translational accuracy. The sequence is that of Small ribosomal subunit protein uS4 from Granulibacter bethesdensis (strain ATCC BAA-1260 / CGDNIH1).